Reading from the N-terminus, the 540-residue chain is CBL-interacting protein kinase 12 (540 aa).

A disordered region spans residues 1 to 23 (MLMATVSPARREPTPQAVRASPM). The 255-residue stretch at 46–300 (YELGRVLGQG…VPEIIESDWF (255 aa)) folds into the Protein kinase domain. ATP-binding positions include 52–60 (LGQGSFAKV) and K75. The active-site Proton acceptor is D168. An activation loop region spans residues 186–215 (DFGLAAGPDQFDPDGLLHTFCGTPAYVAPE). A compositionally biased stretch (pro residues) spans 333–348 (PPPLGLAPPVPPPPQG). The segment at 333–380 (PPPLGLAPPVPPPPQGDDPDGSGSESDSSVVSCPATLSTGESQRVRGS) is disordered. Over residues 353–364 (GSGSESDSSVVS) the composition is skewed to low complexity. The region spanning 370 to 406 (STGESQRVRGSLPRPASLNAFDIISFSKGFNLSGLFE) is the NAF domain. Positions 409–438 (GNEIRFVSGEPMSDIVKKLEEIAKVKSFTV) are PPI.

This sequence belongs to the protein kinase superfamily. CAMK Ser/Thr protein kinase family. SNF1 subfamily. Mg(2+) is required as a cofactor. Autophosphorylated. As to expression, expressed at low levels in leaf blades.

The catalysed reaction is L-seryl-[protein] + ATP = O-phospho-L-seryl-[protein] + ADP + H(+). It catalyses the reaction L-threonyl-[protein] + ATP = O-phospho-L-threonyl-[protein] + ADP + H(+). Its function is as follows. Involved in drought stress tolerance. CIPK serine-threonine protein kinases interact with CBL proteins. Binding of a CBL protein to the regulatory NAF domain of CIPK protein lead to the activation of the kinase in a calcium-dependent manner. In Oryza sativa subsp. japonica (Rice), this protein is CBL-interacting protein kinase 12 (CIPK12).